The primary structure comprises 86 residues: Small ribosomal subunit protein uS17 (86 aa).

The protein belongs to the universal ribosomal protein uS17 family. Part of the 30S ribosomal subunit.

Functionally, one of the primary rRNA binding proteins, it binds specifically to the 5'-end of 16S ribosomal RNA. This chain is Small ribosomal subunit protein uS17, found in Desulfotalea psychrophila (strain LSv54 / DSM 12343).